The sequence spans 315 residues: Probable cell division protein WhiA (315 aa).

Residues 274-308 (SLKNLGELIPGGPISKSGINHRLRKLNEIAEKIRA) constitute a DNA-binding region (H-T-H motif).

This sequence belongs to the WhiA family.

Its function is as follows. Involved in cell division and chromosome segregation. In Ligilactobacillus salivarius (strain UCC118) (Lactobacillus salivarius), this protein is Probable cell division protein WhiA.